The primary structure comprises 172 residues: Putative phosphoesterase BT9727_1129 (172 aa).

The Proton donor role is filled by histidine 34. 2 consecutive short sequence motifs (HXTX) follow at residues 34 to 37 (HITL) and 115 to 118 (HLTI). Histidine 115 acts as the Proton acceptor in catalysis.

This sequence belongs to the 2H phosphoesterase superfamily. YjcG family.

The polypeptide is Putative phosphoesterase BT9727_1129 (Bacillus thuringiensis subsp. konkukian (strain 97-27)).